We begin with the raw amino-acid sequence, 544 residues long: Putative pentatricopeptide repeat-containing protein At5g59200, chloroplastic (544 aa).

The disordered stretch occupies residues 1–21 (MISSLAAITGGPSTFRRDPDS). The transit peptide at 1-25 (MISSLAAITGGPSTFRRDPDSNTLR) directs the protein to the chloroplast. PPR repeat units follow at residues 60 to 90 (DAFVVFELIRVCSTLDSVDYAYDVFSYVSNP), 91 to 125 (NVYLYTAMIDGFVSSGRSADGVSLYHRMIHNSVLP), 127 to 156 (NYVITSVLKACDLKVCREIHAQVLKLGFGS), 157 to 187 (SRSVGLKMMEIYGKSGELVNAKKMFDEMPDR), 188 to 218 (DHVAATVMINCYSECGFIKEALELFQDVKIK), 219 to 253 (DTVCWTAMIDGLVRNKEMNKALELFREMQMENVSA), 254 to 288 (NEFTAVCVLSACSDLGALELGRWVHSFVENQRMEL), 289 to 319 (SNFVGNALINMYSRCGDINEARRVFRVMRDK), 320 to 354 (DVISYNTMISGLAMHGASVEAINEFRDMVNRGFRP), 355 to 385 (NQVTLVALLNACSHGGLLDIGLEVFNSMKRV), and 391 to 421 (QIEHYGCIVDLLGRVGRLEEAYRFIENIPIE). The interval 426–501 (MLGTLLSACK…EPGCSTIEVD (76 aa)) is type E motif. Residues 502–532 (NQIHEFLVGDIAHPHKEAIYQRLQELNRILR) form a type E(+) motif region.

Belongs to the PPR family. PCMP-E subfamily.

It is found in the plastid. Its subcellular location is the chloroplast. Its function is as follows. Involved in RNA editing event in chloroplasts. Required for the editing of a single site in rpl23 transcript. This is Putative pentatricopeptide repeat-containing protein At5g59200, chloroplastic (PCMP-E41) from Arabidopsis thaliana (Mouse-ear cress).